The following is a 424-amino-acid chain: STAM-binding protein (424 aa).

Residues 1 to 127 form an interaction with CHMP3 region; sequence MSDHADVSLP…YEQYKERKKK (127 aa). Residues Ser2 and Ser48 each carry the phosphoserine modification. The tract at residues 227-231 is interaction with STAM; that stretch reads PAKPP. Position 243 is a phosphoserine (Ser243). Positions 257–388 constitute an MPN domain; sequence IVVPRNLCSE…LTDYGLQEIS (132 aa). The Zn(2+) site is built by His335, His337, Asp348, His350, Cys390, His396, and His398. A JAMM motif motif is present at residues 335–348; the sequence is HTHPTQTAFLSSVD.

Belongs to the peptidase M67C family. Interacts with STAM. Interacts with SMAD6 and SMAD7. Interacts with CHMP3; the interaction appears to relieve the autoinhibition of CHMP3. Interacts with SMURF2 and RNF11; this interaction promotes ubiquitination. It depends on Zn(2+) as a cofactor. In terms of processing, phosphorylated after BMP type I receptor activation. Ubiquitinated by SMURF2 in the presence of RNF11.

The protein localises to the nucleus. The protein resides in the membrane. Its subcellular location is the cytoplasm. It localises to the early endosome. With respect to regulation, inhibited by N-ethylmaleimide. In terms of biological role, zinc metalloprotease that specifically cleaves 'Lys-63'-linked polyubiquitin chains. Does not cleave 'Lys-48'-linked polyubiquitin chains. Plays a role in signal transduction for cell growth and MYC induction mediated by IL-2 and GM-CSF. Potentiates BMP (bone morphogenetic protein) signaling by antagonizing the inhibitory action of SMAD6 and SMAD7. Has a key role in regulation of cell surface receptor-mediated endocytosis and ubiquitin-dependent sorting of receptors to lysosomes. Endosomal localization of STAMBP is required for efficient EGFR degradation but not for its internalization. Involved in the negative regulation of PI3K-AKT-mTOR and RAS-MAP signaling pathways. The sequence is that of STAM-binding protein (Stambp) from Rattus norvegicus (Rat).